Here is a 394-residue protein sequence, read N- to C-terminus: MFELVDNVPQSAVIKVIGVGGGGGNAVNHMAATSIEGIEFICANTDAQALKNITARTVLQLGSGVTKGLGAGANPEVGREAAMEDRERIAEVLQGTDMVFITTGMGGGTGTGAAPVIAEVAKGLGILTVAVVTRPFPFEGRKRMQVAEEGIRLLAEHVDSLITIPNEKLLTILGKDASLLSAFAKADDVLAGAVRGISDIIKLSGMINVDFADVKTVMSEMGMAMMGTGFASGPNRAREATEAAIRNPLLEDVHLQGARGILVNITAGPDLSLGEYSDVGNIIEQFASDQAMVKVGTVIDPDMRDELHVTVVATGLGTRADKPMKVVDNTLQPAGAAAAAPAVPRGDQTVNYKDYERPTVQRQSHAASATAAKINPQDDLDYLDIPAFLRRQAD.

GTP-binding positions include 21–25, 108–110, glutamate 139, arginine 143, and aspartate 187; these read GGGGN and GTG.

This sequence belongs to the FtsZ family. Homodimer. Polymerizes to form a dynamic ring structure in a strictly GTP-dependent manner. Interacts directly with several other division proteins.

The protein resides in the cytoplasm. Essential cell division protein that forms a contractile ring structure (Z ring) at the future cell division site. The regulation of the ring assembly controls the timing and the location of cell division. One of the functions of the FtsZ ring is to recruit other cell division proteins to the septum to produce a new cell wall between the dividing cells. Binds GTP and shows GTPase activity. This is Cell division protein FtsZ from Azotobacter vinelandii.